Consider the following 387-residue polypeptide: Pepsin A-5 (387 aa).

The first 15 residues, 1–15 (MKWLWVLGLVALSEC), serve as a signal peptide directing secretion. A propeptide spans 16–62 (LVKIPLMKIKSMRENLRESQVLKDYLEKYPRSRAHVLLEQRRNPAVT) (activation peptide). In terms of domain architecture, Peptidase A1 spans 74–384 (YIGIISIGTP…DRANNRIGLA (311 aa)). The active site involves Asp-92. Intrachain disulfides connect Cys-105–Cys-110 and Cys-266–Cys-270. The active site involves Asp-275. A disulfide bridge connects residues Cys-309 and Cys-343.

It belongs to the peptidase A1 family. Expressed in glandular chief cells of the neonatal stomach. Expressed in yolk sacs of the placenta (at protein level).

Its subcellular location is the secreted. The catalysed reaction is Preferential cleavage: hydrophobic, preferably aromatic, residues in P1 and P1' positions. Cleaves 1-Phe-|-Val-2, 4-Gln-|-His-5, 13-Glu-|-Ala-14, 14-Ala-|-Leu-15, 15-Leu-|-Tyr-16, 16-Tyr-|-Leu-17, 23-Gly-|-Phe-24, 24-Phe-|-Phe-25 and 25-Phe-|-Tyr-26 bonds in the B chain of insulin.. Its activity is regulated as follows. Inhibited by pepstatin A. In terms of biological role, shows particularly broad specificity; although bonds involving phenylalanine and leucine are preferred, many others are also cleaved to some extent. May play a role as a specialized neonatal digestive enzyme. The chain is Pepsin A-5 from Mus musculus (Mouse).